The primary structure comprises 251 residues: Fibroblast growth factor-binding protein 1 (251 aa).

An N-terminal signal peptide occupies residues 1–20 (MRLHSLILLSFLLLATQAFS). The segment at 25-62 (KRAKNAPHSTAEEGVEGSAPSLGKAQNKQRSRTSKSLT) is disordered. 3 cysteine pairs are disulfide-bonded: Cys74–Cys91, Cys100–Cys133, and Cys109–Cys145. Residues 160 to 189 (NARGNTKPRKEKAEVSAREHNKVQEAVSTE) are disordered. Positions 170 to 182 (EKAEVSAREHNKV) are enriched in basic and acidic residues. A glycan (O-linked (GalNAc...) serine) is linked at Ser175. The tract at residues 210–251 (RDPECLEDPDVLNQRKTALEFCGESWSSICTFFLNMLQATSC) is sufficient for interaction with FGF2 and FGF2-induced effects. Intrachain disulfides connect Cys214–Cys251 and Cys231–Cys239.

The protein belongs to the fibroblast growth factor-binding protein family. As to quaternary structure, found in a complex with FGFBP1, FGF1 and FGF2. Interacts with FGF1, FGF7, FGF10, FGF22 and HSPG2. Interacts with FGF2. As to expression, expressed in intestine, ovary, lung, placenta and normal and wounded skin.

The protein localises to the secreted. Its subcellular location is the extracellular space. It is found in the cell membrane. Acts as a carrier protein that releases fibroblast-binding factors (FGFs) from the extracellular matrix (EM) storage and thus enhances the mitogenic activity of FGFs. Enhances FGF2 signaling during tissue repair, angiogenesis and in tumor growth. The protein is Fibroblast growth factor-binding protein 1 (Fgfbp1) of Mus musculus (Mouse).